The following is a 216-amino-acid chain: CsgBAC operon transcriptional regulatory protein (216 aa).

An HTH luxR-type domain is found at 149-214 (NSTESALLTH…QAVSWANDNL (66 aa)). The H-T-H motif DNA-binding region spans 173–192 (NNEIARSLFISENTVKTHLY).

Its subcellular location is the cell inner membrane. Its function is as follows. The master regulator for adhesive curli fimbriae expression; necessary for transcription of the csgBAC/ymdA operon. Plays a positive role in biofilm formation. May have the capability to respond to starvation and/or high cell density by activating csgBA transcription. Low-level constitutive expression confers an adherent curli fimbriae-expressing phenotype, up-regulates 10 genes and down-regulates 14 others. In Escherichia coli (strain K12), this protein is CsgBAC operon transcriptional regulatory protein (csgD).